Reading from the N-terminus, the 221-residue chain is Oxaloacetate tautomerase FAHD1, mitochondrial (221 aa).

A mitochondrion-targeting transit peptide spans 1 to 24; sequence MAASRPLSRFWEWGKNIVCVGRNY. S37 carries the post-translational modification Phosphoserine. The Mg(2+) site is built by E68, E70, and D99. The residue at position 110 (K110) is an N6-acetyllysine. An N6-succinyllysine modification is found at K112.

Belongs to the FAH family. In terms of assembly, homodimer. It depends on Mg(2+) as a cofactor. Mn(2+) serves as cofactor.

It is found in the mitochondrion. The protein localises to the cytoplasm. It localises to the cytosol. The catalysed reaction is oxaloacetate = enol-oxaloacetate. The enzyme catalyses oxaloacetate + H(+) = pyruvate + CO2. It catalyses the reaction a 3-acylpyruvate + H2O = a carboxylate + pyruvate + H(+). It carries out the reaction acetylpyruvate + H2O = acetate + pyruvate + H(+). The catalysed reaction is 3-fumarylpyruvate + H2O = fumarate + pyruvate + H(+). Oxaloacetate decarboxylation is competitively inhibited by oxalate. In terms of biological role, tautomerase that converts enol-oxaloacetate, a strong inhibitor of succinate dehydrogenase, to the physiological keto form of oxaloacetate. It is thereby required to maximize aerobic respiration efficiency by preventing succinate dehydrogenase inhibition. Also acts as a weak oxaloacetate decarboxylase (ODx), catalyzing the decarboxylation of oxaloacetate (OAA) to pyruvate and CO(2), and as such is likely a regulatory enzyme in the TCA cycle. Also displays acylpyruvase activity, being able to hydrolyze acetylpyruvate and fumarylpyruvate in vitro. The protein is Oxaloacetate tautomerase FAHD1, mitochondrial (FAHD1) of Pongo abelii (Sumatran orangutan).